Here is a 368-residue protein sequence, read N- to C-terminus: MDMSERIIVTYQVAAAPAEIAARAEALAIEQSVECPLAAVTEQQIRDEIVGRVEAIAPIGETRFSVRVSLASATAPAEPGQLLNMLFGNSSIQPDVTLADVELPPAYPAAFGGPKLGISGLRAKLGAPRRALTGSALKPQGLAPEALAGLAHRLALGGVDLIKDDHGIADQAFSPFAARVPAVARAMREACAVRGAAMLYAPHVSGSLDDMRRQLDIVRREGLSVVMLMPMIVGLANFHLIAKEAEGLIVLAHPSLAGAQRIAPDLLLGKLFRLLGADATIFPHYGGRFAYTPETCRALADAARRDWHDLKPCLPVPAGGIAIDRIKELLAFYGTDVMLLIGGSLLAAGEQLTEHAARFTAEVASHGQ.

This sequence belongs to the RuBisCO large chain family. Type IV subfamily.

Its function is as follows. Unknown. Probably does not have RuBisCO activity. The sequence is that of Ribulose bisphosphate carboxylase-like protein 1 (rlp1) from Rhodopseudomonas palustris (strain ATCC BAA-98 / CGA009).